The sequence spans 178 residues: Large ribosomal subunit protein uL13m (178 aa).

The residue at position 2 (Ser-2) is an N-acetylserine.

It belongs to the universal ribosomal protein uL13 family. In terms of assembly, component of the mitochondrial large ribosomal subunit (mt-LSU). Mature mammalian 55S mitochondrial ribosomes consist of a small (28S) and a large (39S) subunit. The 28S small subunit contains a 12S ribosomal RNA (12S mt-rRNA) and 30 different proteins. The 39S large subunit contains a 16S rRNA (16S mt-rRNA), a copy of mitochondrial valine transfer RNA (mt-tRNA(Val)), which plays an integral structural role, and 52 different proteins. Interacts with OXA1L.

The protein resides in the mitochondrion. This Homo sapiens (Human) protein is Large ribosomal subunit protein uL13m (MRPL13).